Consider the following 167-residue polypeptide: Small ribosomal subunit protein uS3m (167 aa).

Residues 1–35 (MAASVCSGLLGPRVLSWSRELPCAWRALHTSPVCA) constitute a mitochondrion transit peptide.

It belongs to the universal ribosomal protein uS3 family. Component of the mitochondrial small ribosomal subunit (mt-SSU). Mature mammalian 55S mitochondrial ribosomes consist of a small (28S) and a large (39S) subunit. The 28S small subunit contains a 12S ribosomal RNA (12S mt-rRNA) and 30 different proteins. The 39S large subunit contains a 16S rRNA (16S mt-rRNA), a copy of mitochondrial valine transfer RNA (mt-tRNA(Val)), which plays an integral structural role, and 52 different proteins.

It is found in the mitochondrion. This Homo sapiens (Human) protein is Small ribosomal subunit protein uS3m (MRPS24).